We begin with the raw amino-acid sequence, 79 residues long: Sec-independent protein translocase protein TatA (79 aa).

A helical membrane pass occupies residues Met-1–Gly-21. The span at Gly-42 to Asp-60 shows a compositional bias: basic and acidic residues. The tract at residues Gly-42–Val-79 is disordered. Positions His-61–Asn-70 are enriched in polar residues.

This sequence belongs to the TatA/E family. The Tat system comprises two distinct complexes: a TatABC complex, containing multiple copies of TatA, TatB and TatC subunits, and a separate TatA complex, containing only TatA subunits. Substrates initially bind to the TatABC complex, which probably triggers association of the separate TatA complex to form the active translocon.

The protein localises to the cell inner membrane. Functionally, part of the twin-arginine translocation (Tat) system that transports large folded proteins containing a characteristic twin-arginine motif in their signal peptide across membranes. TatA could form the protein-conducting channel of the Tat system. This Rhodopseudomonas palustris (strain HaA2) protein is Sec-independent protein translocase protein TatA.